Consider the following 479-residue polypeptide: Altronate oxidoreductase (479 aa).

Position 18-29 (18-29) interacts with NAD(+); it reads IIQFGEGNFLRA.

Belongs to the mannitol dehydrogenase family. UxaB subfamily.

The enzyme catalyses D-altronate + NAD(+) = keto-D-tagaturonate + NADH + H(+). It participates in carbohydrate metabolism; pentose and glucuronate interconversion. The sequence is that of Altronate oxidoreductase from Phocaeicola vulgatus (strain ATCC 8482 / DSM 1447 / JCM 5826 / CCUG 4940 / NBRC 14291 / NCTC 11154) (Bacteroides vulgatus).